Here is a 384-residue protein sequence, read N- to C-terminus: MARALVQLWAICMLRVALATVYFQEEFLDGEHWRNRWLQSTNDSRFGHFRLSSGKFYGHKEKDKGLQTTQNGRFYAISARFKPFSNKGKTLVIQYTVKHEQKMDCGGGYIKVFPADIDQKNLNGKSQYYIMFGPDICGFDIKKVHVILHFKNKYHENKKLIRCKVDGFTHLYTLILRPDLSYDVKIDGQSIESGSIEYDWNLTSLKKETSPAESKDWEQTKDNKAQDWEKHFLDASTSKQSDWNGDLDGDWPAPMLQKPPYQDGLKPEGIHKDVWLHRKMKNTDYLTQYDLSEFENIGAIGLELWQVRSGTIFDNFLITDDEEYADNFGKATWGETKGPEREMDAIQAKEEMKKAREEEEEELLSGKINRHEHYFNQFHRRNEL.

Positions 1-19 are cleaved as a signal peptide; that stretch reads MARALVQLWAICMLRVALA. The tract at residues 20–197 is N-domain; the sequence is TVYFQEEFLD…GQSIESGSIE (178 aa). A glycan (N-linked (GlcNAc...) asparagine) is linked at N42. An intrachain disulfide couples C105 to C137. An alpha-D-glucoside-binding residues include Y109, K111, Y128, and D135. Repeat copies occupy residues 191 to 202, 208 to 219, 221 to 230, 234 to 245, 249 to 259, 263 to 271, and 273 to 283. Positions 191-245 are 4 X approximate repeats; it reads IESGSIEYDWNLTSLKKETSPAESKDWEQTKDNKAQDWEKHFLDASTSKQSDWNG. The segment at 198-294 is P-domain; that stretch reads YDWNLTSLKK…YLTQYDLSEF (97 aa). The N-linked (GlcNAc...) asparagine glycan is linked to N201. Residues 249–283 form a 3 X approximate repeats region; sequence GDWPAPMLQKPPYQDGLKPEGIHKDVWLHRKMKNT. The segment at 295 to 384 is C-domain; sequence ENIGAIGLEL…FNQFHRRNEL (90 aa). Residue E303 coordinates an alpha-D-glucoside. The Prevents secretion from ER signature appears at 381–384; sequence RNEL.

This sequence belongs to the calreticulin family. As to quaternary structure, component of an EIF2 complex at least composed of CELF1/CUGBP1, CALR, CALR3, EIF2S1, EIF2S2, HSP90B1 and HSPA5. As to expression, testis specific.

The protein localises to the endoplasmic reticulum lumen. During spermatogenesis, may act as a lectin-independent chaperone for specific client proteins such as ADAM3. Required for sperm fertility. CALR3 capacity for calcium-binding may be absent or much lower than that of CALR. This Homo sapiens (Human) protein is Calreticulin-3 (CALR3).